The sequence spans 273 residues: Undecaprenyl-diphosphatase (273 aa).

The next 8 membrane-spanning stretches (helical) occupy residues 13–35 (LGVVEGLTEFLPVSSTGHMIIVG), 45–65 (ANTFEVVIQLGSILAVVVMFW), 90–110 (LSLIHILLGMIPAVVMGLIFH), 116–136 (LFNPVNVMYALIVGGVLLIAA), 157–177 (AFVIGCFQCLALWPGFSRSGA), 190–210 (YAASEFSFLLAVPMMMGATVL), 222–242 (GDVPMFAVGFVMAFIVALIAI), and 252–272 (ISFIPFAIYRFIVAAAVYVVF).

It belongs to the UppP family.

Its subcellular location is the cell inner membrane. It carries out the reaction di-trans,octa-cis-undecaprenyl diphosphate + H2O = di-trans,octa-cis-undecaprenyl phosphate + phosphate + H(+). Catalyzes the dephosphorylation of undecaprenyl diphosphate (UPP). Confers resistance to bacitracin. The sequence is that of Undecaprenyl-diphosphatase from Klebsiella pneumoniae subsp. pneumoniae (strain ATCC 700721 / MGH 78578).